We begin with the raw amino-acid sequence, 285 residues long: N(G),N(G)-dimethylarginine dimethylaminohydrolase 1 (285 aa).

N-acetylalanine is present on A2. Residues L30, D73, E78–D79, R98, and R145 contribute to the substrate site. H173 (proton donor) is an active-site residue. S-nitrosocysteine is present on C222. V268 is a binding site for substrate. C274 is subject to S-nitrosocysteine. The active-site Nucleophile is the C274. Zn(2+) is bound at residue C274.

It belongs to the DDAH family. In terms of assembly, monomer. In terms of tissue distribution, detected in brain, liver, kidney and pancreas, and at low levels in skeletal muscle.

It catalyses the reaction N(omega),N(omega)-dimethyl-L-arginine + H2O = dimethylamine + L-citrulline. The enzyme catalyses N(omega)-methyl-L-arginine + H2O = L-citrulline + methylamine. Inhibited by zinc ions. Enzyme purified in the absence of 1,10-phenanthroline contains on average 0.4 zinc atoms per subunit. Inhibited by 4-hydroxy-nonenal through the formation of a covalent adduct with His-173. Competitively inhibited by N(5)-iminopropyl-ornithine. Hydrolyzes N(G),N(G)-dimethyl-L-arginine (ADMA) and N(G)-monomethyl-L-arginine (MMA) which act as inhibitors of NOS. Has therefore a role in the regulation of nitric oxide generation. The sequence is that of N(G),N(G)-dimethylarginine dimethylaminohydrolase 1 from Homo sapiens (Human).